Consider the following 233-residue polypeptide: ATP-dependent Clp protease proteolytic subunit 1 (233 aa).

The active-site Nucleophile is the Ser-136. The active site involves His-161.

This sequence belongs to the peptidase S14 family. Fourteen ClpP subunits assemble into 2 heptameric rings which stack back to back to give a disk-like structure with a central cavity, resembling the structure of eukaryotic proteasomes.

It localises to the cytoplasm. The enzyme catalyses Hydrolysis of proteins to small peptides in the presence of ATP and magnesium. alpha-casein is the usual test substrate. In the absence of ATP, only oligopeptides shorter than five residues are hydrolyzed (such as succinyl-Leu-Tyr-|-NHMec, and Leu-Tyr-Leu-|-Tyr-Trp, in which cleavage of the -Tyr-|-Leu- and -Tyr-|-Trp bonds also occurs).. Functionally, cleaves peptides in various proteins in a process that requires ATP hydrolysis. Has a chymotrypsin-like activity. Plays a major role in the degradation of misfolded proteins. The protein is ATP-dependent Clp protease proteolytic subunit 1 of Bifidobacterium longum (strain NCC 2705).